A 215-amino-acid polypeptide reads, in one-letter code: Large ribosomal subunit protein uL3c (215 aa).

Residues Arg-132 to Gly-151 are disordered.

Belongs to the universal ribosomal protein uL3 family. In terms of assembly, part of the 50S ribosomal subunit.

It localises to the plastid. It is found in the chloroplast. One of the primary rRNA binding proteins, it binds directly near the 3'-end of the 23S rRNA, where it nucleates assembly of the 50S subunit. The sequence is that of Large ribosomal subunit protein uL3c (rpl3) from Cyanidium caldarium (Red alga).